The sequence spans 447 residues: Gustatory receptor family protein 3 (447 aa).

At 1–69 (MTITASNTLE…HTHSSARNTM (69 aa)) the chain is on the extracellular side. The chain crosses the membrane as a helical span at residues 70–90 (FKWPLTIYNYLTLAILTAATI). The Cytoplasmic segment spans residues 91-116 (RRISQIKQKSATNEEKDAAFHVLNPT). Residues 117 to 137 (FVLTLCHALLMFSGLAAGFLL) traverse the membrane as a helical segment. Residues 138 to 171 (LKLQKQREKMYHVLDQGLGRNRNEEHDSHHFKLN) lie on the Extracellular side of the membrane. The helical transmembrane segment at 172–192 (KLFISISFSFAAALSFVQIAT) threads the bilayer. Residues 193-211 (KMRYLDLPDTPDLINRKIY) lie on the Cytoplasmic side of the membrane. A helical membrane pass occupies residues 212–232 (FVILEGYVIFIASSCISLVAI). Residues 233–292 (LFFQLCRILQFSIGQLIEEMVPKEKEECPLPEQSLQQIHDVQIHYQEISNAKLYIEQNFS) are Extracellular-facing. Residues 293-313 (FSLFYTYGCCIPLTCLLGYIA) form a helical membrane-spanning segment. Topologically, residues 314–328 (FRNGIQADMAETFSV) are cytoplasmic. A helical transmembrane segment spans residues 329 to 349 (AIWLTNTMLALMLFSIPAFMI). The Extracellular portion of the chain corresponds to 350–405 (AEEGDKLLTASFKMYHETLCEERDLLVLSQMSFLSFQMHATKLTLTAGNFFMMNRK). The chain crosses the membrane as a helical span at residues 406–426 (IMISLFSAIFTYFLILVQFDA). Residues 427-447 (EKERAGECNNQSRVLIVQPPV) are Cytoplasmic-facing.

This sequence belongs to the insect chemoreceptor superfamily. Gustatory receptor (GR) family. Expressed in I2 pharyngeal neurons.

Its subcellular location is the membrane. Chemoreceptor involved in light-induced avoidance behavior. Probably acts as a molecular sensor in I2 pharyngeal neurons, required for the inhibition of feeding in response to light and hydrogen peroxide. Involved in circadian rhythms, probably by acting as a light sensor. In contrast to lite-1, does not act as a photoreceptor. The chain is Gustatory receptor family protein 3 from Caenorhabditis elegans.